The following is a 997-amino-acid chain: Translation initiation factor IF-2 (997 aa).

The segment at 101–406 is disordered; that stretch reads ELAAEQAAAR…SRNQHQDRRH (306 aa). Composition is skewed to low complexity over residues 116 to 185 and 195 to 209; these read AEAV…QAEP and AAPAQAVAEPVEPAK. Residues 231 to 242 show a composition bias toward polar residues; that stretch reads TELTSQTPTPVA. The segment covering 256 to 280 has biased composition (low complexity); sequence AEPAAAPKTTAKPGEIRRAAAPAAP. Residues 281 to 292 are compositionally biased toward basic and acidic residues; that stretch reads DRAREEARRAAE. A compositionally biased stretch (gly residues) spans 385-394; that stretch reads RAGGKGGRGG. The 168-residue stretch at 498-665 folds into the tr-type G domain; sequence PRAPVVTVMG…NVLLQAEILE (168 aa). Residues 507–514 form a G1 region; the sequence is GHVDHGKT. 507 to 514 provides a ligand contact to GTP; sequence GHVDHGKT. The segment at 532–536 is G2; the sequence is GITQH. Residues 553–556 are G3; that stretch reads DTPG. GTP-binding positions include 553 to 557 and 607 to 610; these read DTPGH and NKID. The interval 607–610 is G4; it reads NKID. The tract at residues 643-645 is G5; that stretch reads SAK.

It belongs to the TRAFAC class translation factor GTPase superfamily. Classic translation factor GTPase family. IF-2 subfamily.

It is found in the cytoplasm. Functionally, one of the essential components for the initiation of protein synthesis. Protects formylmethionyl-tRNA from spontaneous hydrolysis and promotes its binding to the 30S ribosomal subunits. Also involved in the hydrolysis of GTP during the formation of the 70S ribosomal complex. The sequence is that of Translation initiation factor IF-2 from Bordetella pertussis (strain Tohama I / ATCC BAA-589 / NCTC 13251).